Reading from the N-terminus, the 634-residue chain is Bacteriophytochrome (634 aa).

Cysteine 13 lines the biliverdin IXalpha pocket. Residues 13–118 (CAREPIHIPG…YPQQWLVEME (106 aa)) enclose the PAS 1 domain. A photosensory core domain region spans residues 13 to 514 (CAREPIHIPG…ELMERKRFQQ (502 aa)). A GAF domain is found at 151 to 305 (RVAKGLRSLI…VTDAVARTLA (155 aa)). The segment at 325–508 (TVREKLITDF…SLRVLIELME (184 aa)) is phytochrome-specific (PHY). The interval 452–480 (WAGNPQLAKLEDIPNSRLSPRKSFDLWQQ) is tongue domain. Residues 515–590 (DFTLLEASLS…ELLQDALRNG (76 aa)) form the PAS 2 domain. The tract at residues 515-634 (DFTLLEASLS…HWLLQLRDPE (120 aa)) is PAS9, output module, not required to bind biliverdin IX-alpha, required for dimerization.

It in the N-terminal section; belongs to the phytochrome family. As to quaternary structure, forms head-to-head homodimers. Post-translationally, contains one covalently linked biliverdin IX-alpha chromophore; present in the crystal structure as a mixture of Pr and Meta-R configurations.

In terms of biological role, photoreceptor which exists in two forms that are reversibly interconvertible by light: far-red light (733 nm) converts protein to the red-absorbing (Pr) form, while red light (630 nm) partly converts the protein to the far-red-absorbing (Pfr) form. Regulates virulence of X.campestris pv. campestris on its host plants, perhaps by fine-tuning expression to ambient light levels and/or spatial cues. The Pr form may sense light and partially inhibit virulence; in the dark (Pfr form) biofilm and xanathan production rise and bacteria are more virulent. Strains overexpressing this protein have significantly decreased amounts of extracellular beta-1,4-endoglucanase, produce less xanthin and have decreased transcription of genes involved in virulence such as endoglucanases, type 2 secretion systems, xanthan production and flagellar-dependent motility. The sequence is that of Bacteriophytochrome (bphP) from Xanthomonas campestris pv. campestris (strain 8004).